Reading from the N-terminus, the 802-residue chain is Oligophrenin-1 (802 aa).

Residues 265–368 (QPTIEGYLYT…WMEAMDGKEP (104 aa)) enclose the PH domain. One can recognise a Rho-GAP domain in the interval 380-564 (MELNEVGFKF…ILIEHFGKIY (185 aa)). Disordered stretches follow at residues 606–665 (SLDE…SEPC) and 681–802 (GTKA…GDES). Residues 617 to 627 (QTPNGTITSNL) show a composition bias toward polar residues. Over residues 716 to 732 (HHKEGDTDGFSKVRPPG) the composition is skewed to basic and acidic residues.

Interacts with HOMER1. Interacts with AMPA receptor complexes. Interacts with SH3GL2 (endophilin-A1). Interacts (via C-terminus) with NR1D1.

It localises to the postsynapse. The protein localises to the presynapse. It is found in the cell projection. Its subcellular location is the axon. The protein resides in the dendritic spine. It localises to the dendrite. The protein localises to the cytoplasm. Functionally, stimulates GTP hydrolysis of members of the Rho family. Its action on RHOA activity and signaling is implicated in growth and stabilization of dendritic spines, and therefore in synaptic function. Critical for the stabilization of AMPA receptors at postsynaptic sites. Critical for the regulation of synaptic vesicle endocytosis at presynaptic terminals. Required for the localization of NR1D1 to dendrites, can suppress its repressor activity and protect it from proteasomal degradation. The protein is Oligophrenin-1 (Ophn1) of Mus musculus (Mouse).